A 421-amino-acid chain; its full sequence is Enolase (421 aa).

A (2R)-2-phosphoglycerate-binding site is contributed by Gln165. Glu207 acts as the Proton donor in catalysis. 3 residues coordinate Mg(2+): Asp244, Glu285, and Asp312. The (2R)-2-phosphoglycerate site is built by Lys337, Arg366, Ser367, and Lys388. Lys337 serves as the catalytic Proton acceptor.

It belongs to the enolase family. It depends on Mg(2+) as a cofactor.

It is found in the cytoplasm. The protein resides in the secreted. The protein localises to the cell surface. It catalyses the reaction (2R)-2-phosphoglycerate = phosphoenolpyruvate + H2O. Its pathway is carbohydrate degradation; glycolysis; pyruvate from D-glyceraldehyde 3-phosphate: step 4/5. In terms of biological role, catalyzes the reversible conversion of 2-phosphoglycerate (2-PG) into phosphoenolpyruvate (PEP). It is essential for the degradation of carbohydrates via glycolysis. In Ehrlichia canis (strain Jake), this protein is Enolase.